Consider the following 97-residue polypeptide: Small cell adhesion glycoprotein (97 aa).

Over 1 to 36 (MNNLPATPSPEELMTTPVFQAPETLSPQAEEASTAL) the chain is Extracellular. A glycan (O-linked (GalNAc...) threonine) is linked at Thr7. Ser9 is a glycosylation site (O-linked (GalNAc...) serine). Residues Thr15, Thr16, and Thr24 are each glycosylated (O-linked (GalNAc...) threonine). A glycan (O-linked (GalNAc...) serine) is linked at Ser26. A helical; Signal-anchor for type III membrane protein membrane pass occupies residues 37 to 57 (IAVVITVVFLTLLSVVTLIFF). Residues 58–97 (HLYKNKGSYVTYEPAEGEPSAILQMETDSAKGREKEEYFI) are Cytoplasmic-facing.

It belongs to the SMAGP family. In terms of processing, O-glycosylated. The O-glycan is modified with sialic acid residues.

It is found in the cell membrane. The protein localises to the cytoplasmic vesicle membrane. In terms of biological role, may play a role in epithelial cell-cell contacts. May play a role in tumor invasiveness and metastasis formation. The protein is Small cell adhesion glycoprotein (Smagp) of Mus musculus (Mouse).